We begin with the raw amino-acid sequence, 261 residues long: RNA-binding protein 1 (261 aa).

2 disordered regions span residues 1–38 and 232–261; these read MADGYWNRQQSLLPHSGLHKRPRPDYEMPASGLPSGNE and QFSRYPGPRSGGGPRSSGPPRGGHGSRGRR. An RRM domain is found at 151–236; sequence PTLYIEGLPS…SHLRLQFSRY (86 aa). Residues 240 to 254 show a composition bias toward gly residues; that stretch reads RSGGGPRSSGPPRGG.

As to expression, ubiquitous.

It is found in the nucleus speckle. Its subcellular location is the cytoplasmic granule. Functionally, RNA-binding protein interacting with the enod40 RNA. This chain is RNA-binding protein 1, found in Medicago truncatula (Barrel medic).